The primary structure comprises 821 residues: Glycogen phosphorylase (821 aa).

Lysine 667 is subject to N6-(pyridoxal phosphate)lysine.

This sequence belongs to the glycogen phosphorylase family. Pyridoxal 5'-phosphate is required as a cofactor.

It carries out the reaction [(1-&gt;4)-alpha-D-glucosyl](n) + phosphate = [(1-&gt;4)-alpha-D-glucosyl](n-1) + alpha-D-glucose 1-phosphate. In terms of biological role, phosphorylase is an important allosteric enzyme in carbohydrate metabolism. Enzymes from different sources differ in their regulatory mechanisms and in their natural substrates. However, all known phosphorylases share catalytic and structural properties. The sequence is that of Glycogen phosphorylase (glgP) from Haemophilus influenzae (strain ATCC 51907 / DSM 11121 / KW20 / Rd).